A 288-amino-acid chain; its full sequence is Prohibitin-1, mitochondrial (288 aa).

The Mitochondrial matrix segment spans residues 1-10 (MNNVKVPKIP). The chain crosses the membrane as a helical; Signal-anchor for type II membrane protein span at residues 11-30 (GGGAISTLLKVGIIGGLGLY). Residues 31–288 (GATHSLYNVE…GMNLDVDAKN (258 aa)) lie on the Mitochondrial intermembrane side of the membrane. Positions 186–219 (KEFTAAIEAKQVAAQEAERAKFIVEKAEQDKRSA) form a coiled coil.

Belongs to the prohibitin family. In terms of assembly, component of a prohibitin multimeric complex in mitochondrial membranes. As to expression, mostly expressed in proliferative tissues, including vasculature, shoot and root apical tissues.

It localises to the mitochondrion inner membrane. Functionally, prohibitin probably acts as a holdase/unfoldase for the stabilization of newly synthesized mitochondrial proteins. In Arabidopsis thaliana (Mouse-ear cress), this protein is Prohibitin-1, mitochondrial (PHB1).